The following is a 91-amino-acid chain: UPF0335 protein BBta_6866 (91 aa).

Belongs to the UPF0335 family.

The protein is UPF0335 protein BBta_6866 of Bradyrhizobium sp. (strain BTAi1 / ATCC BAA-1182).